A 378-amino-acid polypeptide reads, in one-letter code: Protein RecA (378 aa).

Position 79–86 (79–86 (GPESSGKT)) interacts with ATP.

Belongs to the RecA family.

It is found in the cytoplasm. Its function is as follows. Can catalyze the hydrolysis of ATP in the presence of single-stranded DNA, the ATP-dependent uptake of single-stranded DNA by duplex DNA, and the ATP-dependent hybridization of homologous single-stranded DNAs. It interacts with LexA causing its activation and leading to its autocatalytic cleavage. In Streptococcus pyogenes serotype M49 (strain NZ131), this protein is Protein RecA.